A 434-amino-acid polypeptide reads, in one-letter code: Ribosomal protein uS12 methylthiotransferase RimO (434 aa).

The MTTase N-terminal domain occupies 2–112 (AKIGFVSLGC…VLEAVQVVLP (111 aa)). 6 residues coordinate [4Fe-4S] cluster: Cys11, Cys47, Cys76, Cys142, Cys146, and Cys149. The 238-residue stretch at 128-365 (LTPRHYAYVK…LELQARVSLR (238 aa)) folds into the Radical SAM core domain. Positions 368–434 (QRFVGKTLEV…DTYDLHGVQA (67 aa)) constitute a TRAM domain.

The protein belongs to the methylthiotransferase family. RimO subfamily. The cofactor is [4Fe-4S] cluster.

Its subcellular location is the cytoplasm. The catalysed reaction is L-aspartate(89)-[ribosomal protein uS12]-hydrogen + (sulfur carrier)-SH + AH2 + 2 S-adenosyl-L-methionine = 3-methylsulfanyl-L-aspartate(89)-[ribosomal protein uS12]-hydrogen + (sulfur carrier)-H + 5'-deoxyadenosine + L-methionine + A + S-adenosyl-L-homocysteine + 2 H(+). In terms of biological role, catalyzes the methylthiolation of an aspartic acid residue of ribosomal protein uS12. The chain is Ribosomal protein uS12 methylthiotransferase RimO from Thermus thermophilus (strain ATCC 27634 / DSM 579 / HB8).